Here is a 924-residue protein sequence, read N- to C-terminus: Lipoxygenase 7, chloroplastic (924 aa).

The transit peptide at 1–61 (MLRPQLNPSS…GQGSSRVVVV (61 aa)) directs the protein to the chloroplast. The 131-residue stretch at 88–218 (AVATIKVTVG…VGDEGTPSKR (131 aa)) folds into the PLAT domain. One can recognise a Lipoxygenase domain in the interval 225 to 924 (TYLPGQTPAG…GMGIPNSTSI (700 aa)). A disordered region spans residues 231 to 315 (TPAGLRSYRK…PKSETRKGNV (85 aa)). Composition is skewed to basic and acidic residues over residues 239–262 (RKNDLQQKRGDGTGEREADDRVYD) and 302–315 (SKKDPKSETRKGNV). Residues H581, H586, H773, N777, and I924 each coordinate Fe cation.

The protein belongs to the lipoxygenase family. The cofactor is Fe cation.

It is found in the plastid. The protein localises to the chloroplast. The enzyme catalyses (9Z,12Z)-octadecadienoate + O2 = (13S)-hydroperoxy-(9Z,11E)-octadecadienoate. It catalyses the reaction (9Z,12Z,15Z)-octadecatrienoate + O2 = (13S)-hydroperoxy-(9Z,11E,15Z)-octadecatrienoate. It participates in lipid metabolism; oxylipin biosynthesis. Its function is as follows. Plant lipoxygenase may be involved in a number of diverse aspects of plant physiology including growth and development, pest resistance, and senescence or responses to wounding. This lipoxygenase introduces molecular oxygen exclusively into the C-13 position of linoleic and linolenic acids. This Oryza sativa subsp. japonica (Rice) protein is Lipoxygenase 7, chloroplastic (CM-LOX1).